The following is a 416-amino-acid chain: Tumor necrosis factor receptor superfamily member 19 (416 aa).

The signal sequence occupies residues 1-29 (MALKVLPLHRTVLFAAILFLLHLACKVSC). The Extracellular portion of the chain corresponds to 30–170 (ETGDCRQQEF…TVSSPRDTAL (141 aa)). TNFR-Cys repeat units follow at residues 33 to 72 (DCRQ…DAQC) and 74 to 114 (PCRP…DAVC). Disulfide bonds link Cys-34/Cys-46, Cys-49/Cys-62, Cys-52/Cys-72, Cys-75/Cys-89, Cys-92/Cys-106, Cys-95/Cys-114, Cys-117/Cys-135, and Cys-138/Cys-149. Asn-105 carries N-linked (GlcNAc...) asparagine glycosylation. A TNFR-Cys 3; truncated repeat occupies 116-149 (DCLPGFYRKTKLVGFQDMECVPCGDPPPPYEPHC). The chain crosses the membrane as a helical span at residues 171–191 (AAVICSALATVLLALLILCVI). The Cytoplasmic portion of the chain corresponds to 192 to 416 (YCKRQFMEKK…LAMPTAFQDA (225 aa)). A disordered region spans residues 321 to 416 (LCDSYPELTG…LAMPTAFQDA (96 aa)). 3 stretches are compositionally biased toward polar residues: residues 331 to 351 (EDTN…SSGG), 360 to 370 (LESSGNVSEST), and 381 to 396 (VWEQ…TPSQ).

In terms of assembly, associates with TRAF1, TRAF2, TRAF3 and TRAF5. Interacts with LINGO1. In terms of tissue distribution, highly expressed in adult brain, and in embryos from day 11-17, but not earlier. Detected in embryonic brain and epithelium, and at lower levels in adult heart, lung and liver. In neonatal mice, mainly in hair follicles and neuron-like cells in the cerebellum, but not in the skin epidermis. Isoform 3 was found in embryonic day 17.5 skin but not in brain and liver.

The protein localises to the cell membrane. It localises to the secreted. Functionally, can mediate activation of c-Jun and NF-kappa-B. May promote caspase-independent cell death. Isoform 2 and isoform 3 may act as decoy receptors. The polypeptide is Tumor necrosis factor receptor superfamily member 19 (Tnfrsf19) (Mus musculus (Mouse)).